The primary structure comprises 821 residues: MENYLLSSPTQLSQPYDDGTNSLLFMDNYELSQNLSQPLDQHLQSLQQQSQVQSQAPQQVQSLNQHQQLPQIQPFPTLVNNQQYAQETFQQLSQQHQQQQQQQQQFSPFQQSQLQQQFQYQYSQQQQQQHFQQPVTIEEEIVPASNNTNIQISKFFDDNKGDDEDIANSGNFNEFDHSRNISLDDTTITDLHRRENSINPPTGLPHSISSNTIYSYSSFESPQSHIQSQPSYSQGYHNQNSLSTPLRRNKSYSISSANFNQSPVNLATTAMNKIMKTPLRGHTRSRSKVDVNAAVTAAMNLGQATKSNSTSSYNSTLNPFYTPSQQLSSTDDDDISTPLLTPGTKLHTSKSTFFSPYNKDDLEDQDDDAVKQLRKAKSYTSLLRKKKREDMTPSKQNQQHQQQQQQQQQQQQSRQSGGGHIQNLSFPNSTSQPKIDLLAYDQNPMTSYPPMDKSILKNLNQSISPFNKPKLSPPPSNFPSISIDLTTIATNKSSSFSSSTTHRNYNENTPFNSANSTSGGLLPPMATFTVPTVIKEELQVHNLQEEEQEHQDEQMEIDSFESNEKNARPTLSTSSLVRSMKMANLEISNDQQMSSNEDENIVTEAVVKQEKNGPVVDDVNGTGTNSKKPRKKQKSKSKENCNKKGKVATGNGKDNDKNNECLVNKGNKTNNNDTSNDKLDNDNKNTNGNGNNDNDNDSEENNDNVDDADDDDDGTVTIPIPEDLNVTKVKVRNNRSKSNDKSDPKKKHKCPICESRFQRPEHVKRHLKSHSSEKPFECQMPNCGKRFNRKDNLKAHLKKIHGLVKGQEEFTRVLNENKEVS.

Disordered stretches follow at residues 42-66, 219-245, 305-432, 544-576, and 607-750; these read HLQS…LNQH, FESP…LSTP, TKSN…STSQ, QEEE…TSSL, and VKQE…KHKC. The span at 222-245 shows a compositional bias: polar residues; the sequence is PQSHIQSQPSYSQGYHNQNSLSTP. Low complexity predominate over residues 305 to 318; sequence TKSNSTSSYNSTLN. The span at 319–329 shows a compositional bias: polar residues; it reads PFYTPSQQLSS. Positions 372-387 are enriched in basic residues; that stretch reads QLRKAKSYTSLLRKKK. Low complexity predominate over residues 396–412; that stretch reads QNQQHQQQQQQQQQQQQ. Positions 422-432 are enriched in polar residues; that stretch reads QNLSFPNSTSQ. Residues 545–561 show a composition bias toward acidic residues; it reads EEEQEHQDEQMEIDSFE. Composition is skewed to low complexity over residues 662–674 and 684–693; these read LVNK…NNDT and KNTNGNGNND. A compositionally biased stretch (acidic residues) spans 694–714; it reads NDNDSEENNDNVDDADDDDDG. 2 consecutive C2H2-type zinc fingers follow at residues 748–770 and 776–801; these read HKCP…LKSH and FECQ…KKIH. S769 carries the phosphoserine modification.

Phosphorylation at Ser-769 and probably additional serine residues. GLC7 dephosphorylates CAS5 in response to cell wall stress which leads to its translocation to the nucleus.

It is found in the nucleus. The protein resides in the cytoplasm. Its function is as follows. Transcription factor that acts with ADA2 to promote cell wall integrity. Regulates the expression of target genes in concert with the transcriptional regulators SWI4 and SWI6. Crucial for proper cell cycle dynamics and responses to echinocandins, which inhibit beta-1,3-glucan synthesis. Has distinct transcriptional targets under basal and stress conditions. Also regulates a transcriptional network that influences the response to fluconazole. Plays a key role in adherence, hyphal development, and virulence. Acts as a repressor of hypha-specific genes during yeast-form growth. In Candida albicans (strain SC5314 / ATCC MYA-2876) (Yeast), this protein is Cell wall integrity transcriptional regulator CAS5.